Consider the following 21-residue polypeptide: Ocellatin-4 (21 aa).

Ile-21 bears the Isoleucine amide mark.

Expressed by the skin dorsal glands.

The protein localises to the secreted. Functionally, has hemolytic activity against human erythrocytes (HC50=14.3 uM). Has antibacterial activity against the Gram-positive bacterium S.aureus ATCC 25923 (MIC=64 uM) and the Gram-negative bacterium E.coli ATCC 25922 (MIC=64 uM). This Leptodactylus ocellatus (Argus frog) protein is Ocellatin-4.